Here is a 283-residue protein sequence, read N- to C-terminus: Pantothenate synthetase (283 aa).

30–37 serves as a coordination point for ATP; that stretch reads MGYLHDGH. The active-site Proton donor is the His37. Gln61 contributes to the (R)-pantoate binding site. Beta-alanine is bound at residue Gln61. ATP is bound at residue 148–151; that stretch reads GQKD. Gln154 contributes to the (R)-pantoate binding site. Residue 185-188 coordinates ATP; the sequence is MSSR.

It belongs to the pantothenate synthetase family. As to quaternary structure, homodimer.

The protein resides in the cytoplasm. The enzyme catalyses (R)-pantoate + beta-alanine + ATP = (R)-pantothenate + AMP + diphosphate + H(+). The protein operates within cofactor biosynthesis; (R)-pantothenate biosynthesis; (R)-pantothenate from (R)-pantoate and beta-alanine: step 1/1. In terms of biological role, catalyzes the condensation of pantoate with beta-alanine in an ATP-dependent reaction via a pantoyl-adenylate intermediate. This Carboxydothermus hydrogenoformans (strain ATCC BAA-161 / DSM 6008 / Z-2901) protein is Pantothenate synthetase.